The sequence spans 386 residues: Chorismate synthase (386 aa).

NADP(+)-binding residues include R45 and R51. FMN contacts are provided by residues 131–133 (RTS), 251–252 (QG), S294, 309–313 (KPIPS), and R335.

The protein belongs to the chorismate synthase family. In terms of assembly, homotetramer. Requires FMNH2 as cofactor.

The catalysed reaction is 5-O-(1-carboxyvinyl)-3-phosphoshikimate = chorismate + phosphate. It participates in metabolic intermediate biosynthesis; chorismate biosynthesis; chorismate from D-erythrose 4-phosphate and phosphoenolpyruvate: step 7/7. Catalyzes the anti-1,4-elimination of the C-3 phosphate and the C-6 proR hydrogen from 5-enolpyruvylshikimate-3-phosphate (EPSP) to yield chorismate, which is the branch point compound that serves as the starting substrate for the three terminal pathways of aromatic amino acid biosynthesis. This reaction introduces a second double bond into the aromatic ring system. This Clostridium tetani (strain Massachusetts / E88) protein is Chorismate synthase.